We begin with the raw amino-acid sequence, 409 residues long: uncharacterized protein (409 aa).

Residues 3–162 (TDVRVLRQDD…DDVRLRYAVP (160 aa)) form the N-acetyltransferase domain. Acetyl-CoA-binding positions include 82-84 (VSV), 90-95 (RRGVLT), and 118-119 (SE). The active-site Proton donor is the Y123. Catalysis depends on F409, which acts as the Proton acceptor; via carboxylate.

Belongs to the acetyltransferase Eis family. In terms of assembly, homohexamer; trimer of dimers.

This is an uncharacterized protein from Streptomyces avermitilis (strain ATCC 31267 / DSM 46492 / JCM 5070 / NBRC 14893 / NCIMB 12804 / NRRL 8165 / MA-4680).